The following is a 247-amino-acid chain: Carboxy-S-adenosyl-L-methionine synthase (247 aa).

Residues Y39, 64 to 66 (GCS), 89 to 90 (DN), 117 to 118 (DI), N132, and R199 contribute to the S-adenosyl-L-methionine site.

Belongs to the class I-like SAM-binding methyltransferase superfamily. Cx-SAM synthase family. In terms of assembly, homodimer.

It carries out the reaction prephenate + S-adenosyl-L-methionine = carboxy-S-adenosyl-L-methionine + 3-phenylpyruvate + H2O. Its function is as follows. Catalyzes the conversion of S-adenosyl-L-methionine (SAM) to carboxy-S-adenosyl-L-methionine (Cx-SAM). This is Carboxy-S-adenosyl-L-methionine synthase from Escherichia coli O17:K52:H18 (strain UMN026 / ExPEC).